The primary structure comprises 164 residues: SsrA-binding protein (164 aa).

This sequence belongs to the SmpB family.

The protein resides in the cytoplasm. Functionally, required for rescue of stalled ribosomes mediated by trans-translation. Binds to transfer-messenger RNA (tmRNA), required for stable association of tmRNA with ribosomes. tmRNA and SmpB together mimic tRNA shape, replacing the anticodon stem-loop with SmpB. tmRNA is encoded by the ssrA gene; the 2 termini fold to resemble tRNA(Ala) and it encodes a 'tag peptide', a short internal open reading frame. During trans-translation Ala-aminoacylated tmRNA acts like a tRNA, entering the A-site of stalled ribosomes, displacing the stalled mRNA. The ribosome then switches to translate the ORF on the tmRNA; the nascent peptide is terminated with the 'tag peptide' encoded by the tmRNA and targeted for degradation. The ribosome is freed to recommence translation, which seems to be the essential function of trans-translation. The polypeptide is SsrA-binding protein (Gluconobacter oxydans (strain 621H) (Gluconobacter suboxydans)).